A 1381-amino-acid polypeptide reads, in one-letter code: DNA-directed RNA polymerase subunit beta'' (1381 aa).

Cys224, Cys295, Cys302, and Cys305 together coordinate Zn(2+).

It belongs to the RNA polymerase beta' chain family. RpoC2 subfamily. In terms of assembly, in plastids the minimal PEP RNA polymerase catalytic core is composed of four subunits: alpha, beta, beta', and beta''. When a (nuclear-encoded) sigma factor is associated with the core the holoenzyme is formed, which can initiate transcription. Zn(2+) is required as a cofactor.

It is found in the plastid. It localises to the chloroplast. It carries out the reaction RNA(n) + a ribonucleoside 5'-triphosphate = RNA(n+1) + diphosphate. DNA-dependent RNA polymerase catalyzes the transcription of DNA into RNA using the four ribonucleoside triphosphates as substrates. In Guizotia abyssinica (Niger), this protein is DNA-directed RNA polymerase subunit beta''.